Consider the following 169-residue polypeptide: Putative tRNA (cytidine(34)-2'-O)-methyltransferase (169 aa).

S-adenosyl-L-methionine-binding residues include Ile-79, Gly-104, Ile-125, and Ser-133.

This sequence belongs to the class IV-like SAM-binding methyltransferase superfamily. RNA methyltransferase TrmH family. TrmL subfamily.

It localises to the cytoplasm. It catalyses the reaction cytidine(34) in tRNA + S-adenosyl-L-methionine = 2'-O-methylcytidine(34) in tRNA + S-adenosyl-L-homocysteine + H(+). The enzyme catalyses 5-carboxymethylaminomethyluridine(34) in tRNA(Leu) + S-adenosyl-L-methionine = 5-carboxymethylaminomethyl-2'-O-methyluridine(34) in tRNA(Leu) + S-adenosyl-L-homocysteine + H(+). Its function is as follows. Could methylate the ribose at the nucleotide 34 wobble position in tRNA. The sequence is that of Putative tRNA (cytidine(34)-2'-O)-methyltransferase from Listeria monocytogenes serotype 4b (strain F2365).